Reading from the N-terminus, the 664-residue chain is Threonine--tRNA ligase (664 aa).

The 64-residue stretch at 1-64 folds into the TGS domain; the sequence is MSELLKITLP…TADAQLALVT (64 aa). The interval 250–559 is catalytic; it reads DHRKLGNEMD…LIEHFAGRLP (310 aa). Residues Cys-355, His-406, and His-536 each contribute to the Zn(2+) site.

Belongs to the class-II aminoacyl-tRNA synthetase family. In terms of assembly, homodimer. Requires Zn(2+) as cofactor.

The protein resides in the cytoplasm. It catalyses the reaction tRNA(Thr) + L-threonine + ATP = L-threonyl-tRNA(Thr) + AMP + diphosphate + H(+). Its function is as follows. Catalyzes the attachment of threonine to tRNA(Thr) in a two-step reaction: L-threonine is first activated by ATP to form Thr-AMP and then transferred to the acceptor end of tRNA(Thr). Also edits incorrectly charged L-seryl-tRNA(Thr). The polypeptide is Threonine--tRNA ligase (Novosphingobium aromaticivorans (strain ATCC 700278 / DSM 12444 / CCUG 56034 / CIP 105152 / NBRC 16084 / F199)).